The following is a 154-amino-acid chain: MYYYLITLAVIALDQLTKWFVVQNMEIGQKIEVIPGFLYWTSYRNDGAAWSILEGHMWFFYLITVIVIGIIIYIMQKYAKGKRLFSISLAFILGGAIGNFIDRVLHQEVVDFVQTVWGNYYFPIFNVADASLSVGVVLMLVYVFVDDRKTKGIK.

A run of 2 helical transmembrane segments spans residues 55-75 (GHMW…IYIM) and 84-104 (LFSI…IDRV). Residues Asp-111 and Asp-129 contribute to the active site. Residues 124–144 (IFNVADASLSVGVVLMLVYVF) form a helical membrane-spanning segment.

The protein belongs to the peptidase A8 family.

The protein localises to the cell membrane. The enzyme catalyses Release of signal peptides from bacterial membrane prolipoproteins. Hydrolyzes -Xaa-Yaa-Zaa-|-(S,diacylglyceryl)Cys-, in which Xaa is hydrophobic (preferably Leu), and Yaa (Ala or Ser) and Zaa (Gly or Ala) have small, neutral side chains.. The protein operates within protein modification; lipoprotein biosynthesis (signal peptide cleavage). Functionally, this protein specifically catalyzes the removal of signal peptides from prolipoproteins. The sequence is that of Lipoprotein signal peptidase from Listeria welshimeri serovar 6b (strain ATCC 35897 / DSM 20650 / CCUG 15529 / CIP 8149 / NCTC 11857 / SLCC 5334 / V8).